The following is a 324-amino-acid chain: NADH-ubiquinone oxidoreductase chain 1 (324 aa).

8 helical membrane-spanning segments follow: residues 9–29 (LTMALSYAVPILIAVAFLTLV), 75–95 (ILFIATPILALLLAITIWIPL), 106–126 (LGLLFLLSMSSLAVYSILWSG), 142–162 (VAQTISYEVTLAIILLSVIML), 177–197 (PLYLIFSTWPLAMMWYISTLA), 228–248 (LFFLAEYANIMLMNTLTAILF), 259–279 (ELFPLILATKTLLLSSGFLWV), and 300–320 (LPLTLALCLWHTSLPISYAGI).

Belongs to the complex I subunit 1 family.

The protein resides in the mitochondrion inner membrane. The enzyme catalyses a ubiquinone + NADH + 5 H(+)(in) = a ubiquinol + NAD(+) + 4 H(+)(out). In terms of biological role, core subunit of the mitochondrial membrane respiratory chain NADH dehydrogenase (Complex I) that is believed to belong to the minimal assembly required for catalysis. Complex I functions in the transfer of electrons from NADH to the respiratory chain. The immediate electron acceptor for the enzyme is believed to be ubiquinone. The sequence is that of NADH-ubiquinone oxidoreductase chain 1 (MT-ND1) from Struthio camelus (Common ostrich).